The sequence spans 546 residues: Chaperonin GroEL (546 aa).

ATP-binding positions include 29-32 (TMGP), Lys-50, 86-90 (DGTTT), Gly-414, and Asp-492.

Belongs to the chaperonin (HSP60) family. In terms of assembly, forms a cylinder of 14 subunits composed of two heptameric rings stacked back-to-back. Interacts with the co-chaperonin GroES.

It is found in the cytoplasm. It catalyses the reaction ATP + H2O + a folded polypeptide = ADP + phosphate + an unfolded polypeptide.. Functionally, together with its co-chaperonin GroES, plays an essential role in assisting protein folding. The GroEL-GroES system forms a nano-cage that allows encapsulation of the non-native substrate proteins and provides a physical environment optimized to promote and accelerate protein folding. In Helicobacter pylori (strain ATCC 700392 / 26695) (Campylobacter pylori), this protein is Chaperonin GroEL.